Reading from the N-terminus, the 111-residue chain is Nucleoid-associated protein PFL_1905 (111 aa).

Disordered regions lie at residues 1 to 20 and 88 to 111; these read MKGG…EKMA and SNSQ…KLPF.

The protein belongs to the YbaB/EbfC family. In terms of assembly, homodimer.

It is found in the cytoplasm. It localises to the nucleoid. Its function is as follows. Binds to DNA and alters its conformation. May be involved in regulation of gene expression, nucleoid organization and DNA protection. This chain is Nucleoid-associated protein PFL_1905, found in Pseudomonas fluorescens (strain ATCC BAA-477 / NRRL B-23932 / Pf-5).